The primary structure comprises 255 residues: Poxin (255 aa).

Belongs to the poxin family. Highly divergent.

The catalysed reaction is 2',3'-cGAMP + H2O = Gp(2'-5')Ap(3') + H(+). Functionally, nuclease that cleaves 2',3'-cGAMP. The protein is Poxin of Bombyx mori (Silk moth).